A 126-amino-acid chain; its full sequence is MSPQTFCILLIFSLSLEKTSLIVWNIFVNLRLGVFLLLVRIFSSVFLSVTFLGLFRTLLPVGRICFLLLLKADRFLTSSRDPYSRFLPSSRIPKKSFHSPCTDFSILPMSIIVPFSSEYLLVHVQQ.

The next 2 helical transmembrane spans lie at 21-43 (LIVWNIFVNLRLGVFLLLVRIFS) and 48-70 (SVTFLGLFRTLLPVGRICFLLLL).

The protein resides in the membrane. This is an uncharacterized protein from Saccharomyces cerevisiae (strain ATCC 204508 / S288c) (Baker's yeast).